The sequence spans 528 residues: GMP synthase [glutamine-hydrolyzing] (528 aa).

Positions 13-203 constitute a Glutamine amidotransferase type-1 domain; that stretch reads TVLVVDFGAQ…LYEAAGCRPT (191 aa). Cys-90 functions as the Nucleophile in the catalytic mechanism. Residues His-177 and Glu-179 contribute to the active site. The 199-residue stretch at 204–402 folds into the GMPS ATP-PPase domain; the sequence is WTMVNIVEDQ…LGLPAEMVWR (199 aa). 231-237 is an ATP binding site; that stretch reads SGGVDSA.

Homodimer.

The catalysed reaction is XMP + L-glutamine + ATP + H2O = GMP + L-glutamate + AMP + diphosphate + 2 H(+). The protein operates within purine metabolism; GMP biosynthesis; GMP from XMP (L-Gln route): step 1/1. In terms of biological role, catalyzes the synthesis of GMP from XMP. The sequence is that of GMP synthase [glutamine-hydrolyzing] from Thermobifida fusca (strain YX).